We begin with the raw amino-acid sequence, 715 residues long: Fatty acid oxidation complex subunit alpha (715 aa).

The tract at residues methionine 1–proline 190 is enoyl-CoA hydratase. Residues glycine 306–asparagine 715 form a 3-hydroxyacyl-CoA dehydrogenase region.

In the N-terminal section; belongs to the enoyl-CoA hydratase/isomerase family. This sequence in the central section; belongs to the 3-hydroxyacyl-CoA dehydrogenase family. As to quaternary structure, heterotetramer of two alpha chains (FadJ) and two beta chains (FadI).

It localises to the cytoplasm. It catalyses the reaction a (3S)-3-hydroxyacyl-CoA = a (2E)-enoyl-CoA + H2O. The catalysed reaction is a 4-saturated-(3S)-3-hydroxyacyl-CoA = a (3E)-enoyl-CoA + H2O. The enzyme catalyses a (3S)-3-hydroxyacyl-CoA + NAD(+) = a 3-oxoacyl-CoA + NADH + H(+). It carries out the reaction (3S)-3-hydroxybutanoyl-CoA = (3R)-3-hydroxybutanoyl-CoA. Its pathway is lipid metabolism; fatty acid beta-oxidation. In terms of biological role, catalyzes the formation of a hydroxyacyl-CoA by addition of water on enoyl-CoA. Also exhibits 3-hydroxyacyl-CoA epimerase and 3-hydroxyacyl-CoA dehydrogenase activities. This Salmonella dublin (strain CT_02021853) protein is Fatty acid oxidation complex subunit alpha.